Here is a 279-residue protein sequence, read N- to C-terminus: Large ribosomal subunit protein uL2 (279 aa).

The disordered stretch occupies residues 216–279 (KRPSVRGVVM…IQKRKRNRNR (64 aa)). The span at 270–279 (IQKRKRNRNR) shows a compositional bias: basic residues.

This sequence belongs to the universal ribosomal protein uL2 family. Part of the 50S ribosomal subunit. Forms a bridge to the 30S subunit in the 70S ribosome.

Its function is as follows. One of the primary rRNA binding proteins. Required for association of the 30S and 50S subunits to form the 70S ribosome, for tRNA binding and peptide bond formation. It has been suggested to have peptidyltransferase activity; this is somewhat controversial. Makes several contacts with the 16S rRNA in the 70S ribosome. This chain is Large ribosomal subunit protein uL2, found in Leptospira interrogans serogroup Icterohaemorrhagiae serovar copenhageni (strain Fiocruz L1-130).